A 298-amino-acid chain; its full sequence is Iron-regulated virulence regulatory protein IrgB (298 aa).

An HTH lysR-type domain is found at methionine 1–threonine 59. A DNA-binding region (H-T-H motif) is located at residues leucine 19–alanine 38.

It belongs to the LysR transcriptional regulatory family.

Functionally, transcription activation of the irgA gene. In the presence of sufficient iron, transcription of both irgA and irgB is negatively regulated by a fur-like protein. In low iron conditions, negative regulation of transcription is removed, and production of irgB leads to positive transcriptional activation of irgA. This is Iron-regulated virulence regulatory protein IrgB (irgB) from Vibrio cholerae serotype O1 (strain ATCC 39315 / El Tor Inaba N16961).